We begin with the raw amino-acid sequence, 883 residues long: Phosphoenolpyruvate carboxylase (883 aa).

Catalysis depends on residues H141 and K547.

The protein belongs to the PEPCase type 1 family. Requires Mg(2+) as cofactor.

It catalyses the reaction oxaloacetate + phosphate = phosphoenolpyruvate + hydrogencarbonate. Its function is as follows. Forms oxaloacetate, a four-carbon dicarboxylic acid source for the tricarboxylic acid cycle. The protein is Phosphoenolpyruvate carboxylase of Chromohalobacter salexigens (strain ATCC BAA-138 / DSM 3043 / CIP 106854 / NCIMB 13768 / 1H11).